The primary structure comprises 433 residues: Glutamate-1-semialdehyde 2,1-aminomutase (433 aa).

Lys270 bears the N6-(pyridoxal phosphate)lysine mark.

Belongs to the class-III pyridoxal-phosphate-dependent aminotransferase family. HemL subfamily. As to quaternary structure, homodimer. Pyridoxal 5'-phosphate serves as cofactor.

It is found in the cytoplasm. It catalyses the reaction (S)-4-amino-5-oxopentanoate = 5-aminolevulinate. Its pathway is porphyrin-containing compound metabolism; protoporphyrin-IX biosynthesis; 5-aminolevulinate from L-glutamyl-tRNA(Glu): step 2/2. The polypeptide is Glutamate-1-semialdehyde 2,1-aminomutase (Clostridium novyi (strain NT)).